The following is a 54-amino-acid chain: Ovomucoid (54 aa).

A Kazal-like domain is found at 4–54; sequence VDCSDYPKPACTLEYMPLCGSDNKTYGNRCNFCNAVVDSNGTLTLSHFGKC. Disulfide bonds link C6-C36, C14-C33, and C22-C54. A glycan (N-linked (GlcNAc...) asparagine) is linked at N43.

It is found in the secreted. The sequence is that of Ovomucoid from Dendrocygna viduata (White-faced whistling-duck).